Reading from the N-terminus, the 1692-residue chain is Protein TOPAZ1 (1692 aa).

Disordered stretches follow at residues 1 to 135 (MRRP…PGLD), 600 to 629 (ELSR…TGNK), and 894 to 919 (EPNV…EPSD). The segment covering 31–40 (GAAGGCGPEA) has biased composition (gly residues). Basic and acidic residues predominate over residues 95-116 (SDPRGLEAAKEAELPLQTERHT). Polar residues predominate over residues 608–627 (VISNTTEDTQLTSETQSLTG). The segment covering 902 to 919 (QSTDSKYMETPVKKEPSD) has biased composition (basic and acidic residues).

It is found in the cytoplasm. The protein resides in the cytosol. Functionally, important for normal spermatogenesis and male fertility. Specifically required for progression to the post-meiotic stages of spermatocyte development. Seems to be necessary for normal expression levels of a number of testis-expressed gene transcripts, although its role in this process is unclear. This Homo sapiens (Human) protein is Protein TOPAZ1 (TOPAZ1).